A 329-amino-acid polypeptide reads, in one-letter code: Isopentenyl-diphosphate delta-isomerase (329 aa).

A substrate-binding site is contributed by Arg-4 to Lys-5. FMN is bound by residues Ala-59–Thr-61, Ser-89, and Asn-116. Gln-146 is a substrate binding site. Mg(2+) is bound at residue Glu-147. Residues Lys-178, Ser-203, Thr-208, Gly-252–Arg-254, and Ser-273–Arg-274 contribute to the FMN site.

Belongs to the IPP isomerase type 2 family. In terms of assembly, homooctamer. Dimer of tetramers. The cofactor is FMN. NADPH is required as a cofactor. It depends on Mg(2+) as a cofactor.

Its subcellular location is the cytoplasm. It catalyses the reaction isopentenyl diphosphate = dimethylallyl diphosphate. Involved in the biosynthesis of isoprenoids. Catalyzes the 1,3-allylic rearrangement of the homoallylic substrate isopentenyl (IPP) to its allylic isomer, dimethylallyl diphosphate (DMAPP). The protein is Isopentenyl-diphosphate delta-isomerase of Streptococcus pyogenes serotype M28 (strain MGAS6180).